A 250-amino-acid chain; its full sequence is Probable transcriptional regulatory protein Mmc1_0479 (250 aa).

It belongs to the TACO1 family.

The protein resides in the cytoplasm. This chain is Probable transcriptional regulatory protein Mmc1_0479, found in Magnetococcus marinus (strain ATCC BAA-1437 / JCM 17883 / MC-1).